Reading from the N-terminus, the 358-residue chain is Neuronal-specific septin-3 (358 aa).

Residues 1 to 10 are compositionally biased toward basic and acidic residues; it reads MSKGLPETRT. Residues 1–30 form a disordered region; the sequence is MSKGLPETRTDAAMSELVPEPRPKPAVPMK. One can recognise a Septin-type G domain in the interval 58-331; sequence TGFDFNIMVV…ETYRAKRLND (274 aa). Residues 68–75 form a G1 motif region; sequence GQSGLGKS. A GTP-binding site is contributed by 68–75; sequence GQSGLGKS. Phosphoserine is present on Ser-91. Thr-102 contributes to the GTP binding site. The interval 125 to 128 is G3 motif; that stretch reads DTPG. Residues 207-210 are G4 motif; sequence AKAD. Residues 208–216, Gly-265, and Arg-280 contribute to the GTP site; that span reads KADTMTLEE.

It belongs to the TRAFAC class TrmE-Era-EngA-EngB-Septin-like GTPase superfamily. Septin GTPase family. In terms of assembly, septins polymerize into heterooligomeric protein complexes that form filaments, and can associate with cellular membranes, actin filaments and microtubules. GTPase activity is required for filament formation. Post-translationally, phosphorylated by PKG on serine residues. Phosphorylated by PKG on Ser-91. In terms of tissue distribution, brain-specific.

The protein localises to the cytoplasm. Its subcellular location is the cytoskeleton. It is found in the synapse. Filament-forming cytoskeletal GTPase. May play a role in cytokinesis (Potential). This is Neuronal-specific septin-3 from Homo sapiens (Human).